Reading from the N-terminus, the 190-residue chain is Threonylcarbamoyl-AMP synthase (190 aa).

A YrdC-like domain is found at glycine 7–glycine 190.

Belongs to the SUA5 family. TsaC subfamily.

Its subcellular location is the cytoplasm. The enzyme catalyses L-threonine + hydrogencarbonate + ATP = L-threonylcarbamoyladenylate + diphosphate + H2O. Its function is as follows. Required for the formation of a threonylcarbamoyl group on adenosine at position 37 (t(6)A37) in tRNAs that read codons beginning with adenine. Catalyzes the conversion of L-threonine, HCO(3)(-)/CO(2) and ATP to give threonylcarbamoyl-AMP (TC-AMP) as the acyladenylate intermediate, with the release of diphosphate. The chain is Threonylcarbamoyl-AMP synthase from Escherichia coli O6:H1 (strain CFT073 / ATCC 700928 / UPEC).